The chain runs to 314 residues: tRNA-cytidine(32) 2-sulfurtransferase (314 aa).

The short motif at 39–44 is the PP-loop motif element; the sequence is SGGKDS. 3 residues coordinate [4Fe-4S] cluster: Cys114, Cys117, and Cys205.

It belongs to the TtcA family. Homodimer. Requires Mg(2+) as cofactor. [4Fe-4S] cluster serves as cofactor.

Its subcellular location is the cytoplasm. The catalysed reaction is cytidine(32) in tRNA + S-sulfanyl-L-cysteinyl-[cysteine desulfurase] + AH2 + ATP = 2-thiocytidine(32) in tRNA + L-cysteinyl-[cysteine desulfurase] + A + AMP + diphosphate + H(+). It functions in the pathway tRNA modification. Its function is as follows. Catalyzes the ATP-dependent 2-thiolation of cytidine in position 32 of tRNA, to form 2-thiocytidine (s(2)C32). The sulfur atoms are provided by the cysteine/cysteine desulfurase (IscS) system. This Cupriavidus metallidurans (strain ATCC 43123 / DSM 2839 / NBRC 102507 / CH34) (Ralstonia metallidurans) protein is tRNA-cytidine(32) 2-sulfurtransferase.